We begin with the raw amino-acid sequence, 74 residues long: Putative defensin-like protein 36 (74 aa).

The signal sequence occupies residues 1–22 (MASNKVSFFLVLCLCILLAGEC). Cystine bridges form between C33–C59, C45–C69, and C49–C71.

Belongs to the DEFL family.

The protein resides in the secreted. The polypeptide is Putative defensin-like protein 36 (Arabidopsis thaliana (Mouse-ear cress)).